Consider the following 208-residue polypeptide: Large ribosomal subunit protein uL3c (208 aa).

A disordered region spans residues 129 to 165 (TRGPMTHGSKNHREPGSIGQGSTPGKVHKGKKMAGRL).

It belongs to the universal ribosomal protein uL3 family. In terms of assembly, part of the 50S ribosomal subunit.

It is found in the plastid. Its subcellular location is the chloroplast. In terms of biological role, one of the primary rRNA binding proteins, it binds directly near the 3'-end of the 23S rRNA, where it nucleates assembly of the 50S subunit. This Rhodomonas salina (Cryptomonas salina) protein is Large ribosomal subunit protein uL3c (rpl3).